The primary structure comprises 821 residues: Zinc finger protein 41 (821 aa).

Residues 1–55 (MAANGDSPPWSPALAAEGRGSSCEVRRERTPEARIHSVKRYPDLSPGPKGRSSAD) form a disordered region. A compositionally biased stretch (basic and acidic residues) spans 24–35 (EVRRERTPEARI). A KRAB domain is found at 69-140 (VSFEDVTVDF…EGEAPHQSCS (72 aa)). Lysine 120 is covalently cross-linked (Glycyl lysine isopeptide (Lys-Gly) (interchain with G-Cter in SUMO2)). The C2H2-type 1 zinc-finger motif lies at 313–335 (YVCTECVMGFTQKSHLFEHQRIH). The C2H2-type 2; degenerate zinc-finger motif lies at 341–364 (RECDKSNKVFPQKPQVDVHPSVYT). C2H2-type zinc fingers lie at residues 369 to 391 (YLCT…QKIH), 397 to 419 (YKCS…LRIH), 425 to 447 (YECS…QKTH), 453 to 475 (YECN…QRIH), 481 to 503 (YVCA…QRIH), 509 to 531 (YECS…QRIH), 537 to 559 (YICT…QKTH), 565 to 587 (YMCA…QKTH), 593 to 615 (YKCN…QKSH), and 621 to 643 (YECK…QRIH). Residue lysine 647 forms a Glycyl lysine isopeptide (Lys-Gly) (interchain with G-Cter in SUMO2) linkage. 6 C2H2-type zinc fingers span residues 649–671 (YVCP…HRIH), 677–699 (YECS…QKIH), 705–727 (NICA…QKIH), 733–755 (YECG…QKSH), 761–783 (YECS…QIIH), and 789–811 (YACT…QKMH).

Belongs to the krueppel C2H2-type zinc-finger protein family. Expressed in the heart, brain, placenta, lung, liver, skeletal muscle, kidney and pancreas.

It is found in the nucleus. May be involved in transcriptional regulation. The sequence is that of Zinc finger protein 41 (ZNF41) from Homo sapiens (Human).